The primary structure comprises 426 residues: Mediator of RNA polymerase II transcription subunit 1 (426 aa).

Residues 324–356 (VGDAPAPAAQPPLHRRRSSNKGCRRASAAESAT) form a disordered region. A compositionally biased stretch (basic residues) spans 336 to 347 (LHRRRSSNKGCR).

The protein belongs to the Mediator complex subunit 1 family. In terms of assembly, component of the Mediator complex.

The protein localises to the nucleus. In terms of biological role, component of the Mediator complex, a coactivator involved in the regulated transcription of nearly all RNA polymerase II-dependent genes. Mediator functions as a bridge to convey information from gene-specific regulatory proteins to the basal RNA polymerase II transcription machinery. Mediator is recruited to promoters by direct interactions with regulatory proteins and serves as a scaffold for the assembly of a functional preinitiation complex with RNA polymerase II and the general transcription factors. In Eremothecium gossypii (strain ATCC 10895 / CBS 109.51 / FGSC 9923 / NRRL Y-1056) (Yeast), this protein is Mediator of RNA polymerase II transcription subunit 1 (MED1).